The primary structure comprises 414 residues: Putative transporter AmpG 4 (414 aa).

Helical transmembrane passes span 15-35 (IFIL…TLSV), 44-63 (IAVI…KVFW), 84-104 (WLIL…KENP), 109-129 (TSLY…DIAV), 150-170 (VFGY…LAEI), 177-197 (LTFV…ITVN), 230-250 (FAVT…MLGA), 268-288 (IIAK…GGIV), 295-315 (FKGL…FIWL), 324-344 (ALLI…TALV), 360-379 (YALL…IYAG), and 389-409 (GFFI…MYLN).

It belongs to the major facilitator superfamily.

The protein resides in the cell inner membrane. The polypeptide is Putative transporter AmpG 4 (ampG4) (Rickettsia felis (strain ATCC VR-1525 / URRWXCal2) (Rickettsia azadi)).